The primary structure comprises 490 residues: Cis-aconitate decarboxylase (490 aa).

The protein belongs to the PrpD family.

It is found in the mitochondrion. The enzyme catalyses cis-aconitate + H(+) = itaconate + CO2. Functionally, involved in the production of itaconic acid, a soluble unsaturated dicarboxylic acid mainly produced from sugars. This chain is Cis-aconitate decarboxylase (cad1), found in Aspergillus terreus.